A 304-amino-acid chain; its full sequence is Phosphate transport system permease protein PstA 1 (304 aa).

Transmembrane regions (helical) follow at residues 36–56 (FFFT…WVVI), 96–116 (AGVA…YLVE), 132–152 (VLAG…WIAT), 155–175 (FQQS…PVVV), 204–224 (IVRI…LLSI), and 276–296 (WGAA…AAMI). Residues 89-297 (LYGTLVQAGV…TINLAAAMIR (209 aa)) enclose the ABC transmembrane type-1 domain.

The protein belongs to the binding-protein-dependent transport system permease family. CysTW subfamily.

Its subcellular location is the cell membrane. Functionally, part of the binding-protein-dependent transport system for phosphate; probably responsible for the translocation of the substrate across the membrane. The chain is Phosphate transport system permease protein PstA 1 (pstA1) from Mycobacterium tuberculosis (strain CDC 1551 / Oshkosh).